The sequence spans 156 residues: Small ribosomal subunit protein uS7 (156 aa).

The protein belongs to the universal ribosomal protein uS7 family. As to quaternary structure, part of the 30S ribosomal subunit. Contacts proteins S9 and S11.

Functionally, one of the primary rRNA binding proteins, it binds directly to 16S rRNA where it nucleates assembly of the head domain of the 30S subunit. Is located at the subunit interface close to the decoding center, probably blocks exit of the E-site tRNA. The sequence is that of Small ribosomal subunit protein uS7 from Pseudomonas fluorescens (strain SBW25).